We begin with the raw amino-acid sequence, 293 residues long: 4-hydroxy-tetrahydrodipicolinate synthase (293 aa).

Residue T45 coordinates pyruvate. Y133 acts as the Proton donor/acceptor in catalysis. The active-site Schiff-base intermediate with substrate is K162. Position 204 (I204) interacts with pyruvate.

The protein belongs to the DapA family. Homotetramer; dimer of dimers.

It is found in the cytoplasm. The catalysed reaction is L-aspartate 4-semialdehyde + pyruvate = (2S,4S)-4-hydroxy-2,3,4,5-tetrahydrodipicolinate + H2O + H(+). Its pathway is amino-acid biosynthesis; L-lysine biosynthesis via DAP pathway; (S)-tetrahydrodipicolinate from L-aspartate: step 3/4. Its function is as follows. Catalyzes the condensation of (S)-aspartate-beta-semialdehyde [(S)-ASA] and pyruvate to 4-hydroxy-tetrahydrodipicolinate (HTPA). In Brucella abortus biovar 1 (strain 9-941), this protein is 4-hydroxy-tetrahydrodipicolinate synthase.